A 222-amino-acid chain; its full sequence is UPF0502 protein XAC4278 (222 aa).

The protein belongs to the UPF0502 family.

This Xanthomonas axonopodis pv. citri (strain 306) protein is UPF0502 protein XAC4278.